Here is a 1009-residue protein sequence, read N- to C-terminus: Type VII secretion system accessory factor EsaA (1009 aa).

The next 6 membrane-spanning stretches (helical) occupy residues 7–27 (IYALIVTLIIIIAIVSMIFFV), 822–842 (ISPTLFVLLMYLLSMITAYIF), 869–889 (AITSGVIGATGLVEGLIVGLI), 903–923 (KFILMVILTMMVFVLINTYLL), 928–948 (SIGMFLMIAALGLYFVAMNNL), and 979–999 (IGLALVILTVLVIIGFVLNMF).

This sequence belongs to the EsaA family. Homodimer. Interacts with EssB.

The protein resides in the cell membrane. In terms of biological role, component of the type VII secretion system (Ess). Provides together with EssB and other components such as EssC and EssE a secretion platform across the cytoplasmic membrane in the host. The chain is Type VII secretion system accessory factor EsaA from Staphylococcus aureus (strain MRSA252).